The sequence spans 1429 residues: uncharacterized protein (1429 aa).

Disordered stretches follow at residues 1 to 76 (MEGE…SGIE) and 103 to 130 (PAGA…AGEK). The span at 14 to 29 (SHSTSVVSERASSSGV) shows a compositional bias: low complexity. A compositionally biased stretch (polar residues) spans 109–121 (SAQNANLISSKSE). 2 consecutive transmembrane segments (helical) span residues 197-217 (LTGQ…LSWI) and 225-245 (FFIL…CMIS). Residues 266–471 (DYETMSWFNT…WPNMFDYDLS (206 aa)) form the SMP-LTD domain. 2 C2 domains span residues 462–584 (WPNM…GDIY) and 738–858 (TPVD…DRSA). The segment at 899-932 (NTDNSSKQSSENVQSATDPTTPAKDNSTSNAETS) is disordered. In terms of domain architecture, C2 3 spans 1060–1177 (TYMPVPMTLN…EPNVESQQSI (118 aa)). Residues 1280-1303 (EKNPSRSDLTTTQEASSSASVPPA) form a disordered region. The segment covering 1294 to 1303 (ASSSASVPPA) has biased composition (low complexity).

It is found in the membrane. This is an uncharacterized protein from Schizosaccharomyces pombe (strain 972 / ATCC 24843) (Fission yeast).